Consider the following 357-residue polypeptide: Guanine nucleotide-binding protein G(o) subunit alpha (357 aa).

A lipid anchor (N-myristoyl glycine) is attached at G2. The S-palmitoyl cysteine moiety is linked to residue C3. Residues 32–357 (KDIKLLLLGA…ANNLRGCGLY (326 aa)) enclose the G-alpha domain. Positions 35–48 (KLLLLGAGESGKST) are G1 motif. GTP contacts are provided by residues 40-47 (GAGESGKS), 179-185 (LRTRVKT), 204-208 (DVGGQ), 273-276 (NKKD), and A329. Mg(2+) contacts are provided by S47 and T185. A G2 motif region spans residues 177-185 (DILRTRVKT). A G3 motif region spans residues 200-209 (FKLFDVGGQR). Residues 269 to 276 (ILFLNKKD) are G4 motif. Residues 327 to 332 (TCATDT) are G5 motif.

It belongs to the G-alpha family. G(i/o/t/z) subfamily. G proteins are composed of 3 units; alpha, beta and gamma. The alpha chain contains the guanine nucleotide binding site.

Its function is as follows. Guanine nucleotide-binding proteins (G proteins) are involved as modulators or transducers in various transmembrane signaling systems. The G(o) protein function is not clear. The chain is Guanine nucleotide-binding protein G(o) subunit alpha (SCGOA) from Mizuhopecten yessoensis (Japanese scallop).